Consider the following 860-residue polypeptide: Leucine--tRNA ligase (860 aa).

The short motif at 42 to 52 (PYPSGRLHMGH) is the 'HIGH' region element. The short motif at 619 to 623 (KMSKS) is the 'KMSKS' region element. ATP is bound at residue lysine 622.

The protein belongs to the class-I aminoacyl-tRNA synthetase family.

It localises to the cytoplasm. It carries out the reaction tRNA(Leu) + L-leucine + ATP = L-leucyl-tRNA(Leu) + AMP + diphosphate. The protein is Leucine--tRNA ligase of Salmonella typhi.